The sequence spans 341 residues: Anthranilate phosphoribosyltransferase (341 aa).

Residues Gly-80, 83–84, Thr-88, 90–93, 108–116, and Ser-120 contribute to the 5-phospho-alpha-D-ribose 1-diphosphate site; these read GD, NIST, and KHGNRAVSS. An anthranilate-binding site is contributed by Gly-80. Ser-92 contacts Mg(2+). Asn-111 is a binding site for anthranilate. Arg-166 lines the anthranilate pocket. Asp-225 and Glu-226 together coordinate Mg(2+).

This sequence belongs to the anthranilate phosphoribosyltransferase family. As to quaternary structure, homodimer. It depends on Mg(2+) as a cofactor.

The catalysed reaction is N-(5-phospho-beta-D-ribosyl)anthranilate + diphosphate = 5-phospho-alpha-D-ribose 1-diphosphate + anthranilate. It participates in amino-acid biosynthesis; L-tryptophan biosynthesis; L-tryptophan from chorismate: step 2/5. In terms of biological role, catalyzes the transfer of the phosphoribosyl group of 5-phosphorylribose-1-pyrophosphate (PRPP) to anthranilate to yield N-(5'-phosphoribosyl)-anthranilate (PRA). This is Anthranilate phosphoribosyltransferase from Priestia megaterium (strain ATCC 12872 / QMB1551) (Bacillus megaterium).